We begin with the raw amino-acid sequence, 492 residues long: Glutamyl-tRNA(Gln) amidotransferase subunit A (492 aa).

Active-site charge relay system residues include Lys-79 and Ser-154. Residue Ser-178 is the Acyl-ester intermediate of the active site.

It belongs to the amidase family. GatA subfamily. Heterotrimer of A, B and C subunits.

It carries out the reaction L-glutamyl-tRNA(Gln) + L-glutamine + ATP + H2O = L-glutaminyl-tRNA(Gln) + L-glutamate + ADP + phosphate + H(+). Allows the formation of correctly charged Gln-tRNA(Gln) through the transamidation of misacylated Glu-tRNA(Gln) in organisms which lack glutaminyl-tRNA synthetase. The reaction takes place in the presence of glutamine and ATP through an activated gamma-phospho-Glu-tRNA(Gln). The chain is Glutamyl-tRNA(Gln) amidotransferase subunit A from Acinetobacter baumannii (strain ATCC 17978 / DSM 105126 / CIP 53.77 / LMG 1025 / NCDC KC755 / 5377).